A 221-amino-acid chain; its full sequence is Extracellular superoxide dismutase [Cu-Zn] (221 aa).

The N-terminal stretch at 1–19 is a signal peptide; sequence MKTRVVLILALSVCIEAAS. Residue N56 is glycosylated (N-linked (GlcNAc...) asparagine). Positions 70, 72, and 87 each coordinate Cu cation. Cysteines 81 and 170 form a disulfide. 4 residues coordinate Zn(2+): H87, H95, H104, and D107. Residue H144 participates in Cu cation binding.

This sequence belongs to the Cu-Zn superoxide dismutase family. Requires Cu cation as cofactor. Zn(2+) is required as a cofactor. Isoform 2 is preferentially expressed in eggs.

It localises to the secreted. It is found in the extracellular space. The protein resides in the membrane. The catalysed reaction is 2 superoxide + 2 H(+) = H2O2 + O2. Its function is as follows. Protects cells against oxidative stress by converting superoxide radicals to hydrogen peroxide. Oxidative stress is involved in various biological dysfunctions and senescence. This chain is Extracellular superoxide dismutase [Cu-Zn] (sod-4), found in Caenorhabditis elegans.